The following is a 149-amino-acid chain: SsrA-binding protein (149 aa).

Belongs to the SmpB family.

It is found in the cytoplasm. In terms of biological role, required for rescue of stalled ribosomes mediated by trans-translation. Binds to transfer-messenger RNA (tmRNA), required for stable association of tmRNA with ribosomes. tmRNA and SmpB together mimic tRNA shape, replacing the anticodon stem-loop with SmpB. tmRNA is encoded by the ssrA gene; the 2 termini fold to resemble tRNA(Ala) and it encodes a 'tag peptide', a short internal open reading frame. During trans-translation Ala-aminoacylated tmRNA acts like a tRNA, entering the A-site of stalled ribosomes, displacing the stalled mRNA. The ribosome then switches to translate the ORF on the tmRNA; the nascent peptide is terminated with the 'tag peptide' encoded by the tmRNA and targeted for degradation. The ribosome is freed to recommence translation, which seems to be the essential function of trans-translation. In Anaplasma phagocytophilum (strain HZ), this protein is SsrA-binding protein.